The following is a 181-amino-acid chain: Large ribosomal subunit protein uL5 (181 aa).

Belongs to the universal ribosomal protein uL5 family. Part of the 50S ribosomal subunit; part of the 5S rRNA/L5/L18/L25 subcomplex. Contacts the 5S rRNA and the P site tRNA. Forms a bridge to the 30S subunit in the 70S ribosome.

In terms of biological role, this is one of the proteins that bind and probably mediate the attachment of the 5S RNA into the large ribosomal subunit, where it forms part of the central protuberance. In the 70S ribosome it contacts protein S13 of the 30S subunit (bridge B1b), connecting the 2 subunits; this bridge is implicated in subunit movement. Contacts the P site tRNA; the 5S rRNA and some of its associated proteins might help stabilize positioning of ribosome-bound tRNAs. This Desulforamulus reducens (strain ATCC BAA-1160 / DSM 100696 / MI-1) (Desulfotomaculum reducens) protein is Large ribosomal subunit protein uL5.